The sequence spans 207 residues: Large ribosomal subunit protein uL4 (207 aa).

Positions 54 to 76 (RSAVRGGGRKPWRQKGTGRARQG) are disordered. Over residues 60-71 (GGRKPWRQKGTG) the composition is skewed to basic residues.

The protein belongs to the universal ribosomal protein uL4 family. As to quaternary structure, part of the 50S ribosomal subunit.

Its function is as follows. One of the primary rRNA binding proteins, this protein initially binds near the 5'-end of the 23S rRNA. It is important during the early stages of 50S assembly. It makes multiple contacts with different domains of the 23S rRNA in the assembled 50S subunit and ribosome. In terms of biological role, forms part of the polypeptide exit tunnel. This chain is Large ribosomal subunit protein uL4, found in Staphylococcus haemolyticus (strain JCSC1435).